Here is a 108-residue protein sequence, read N- to C-terminus: UPF0102 protein Sfri_0388 (108 aa).

The protein belongs to the UPF0102 family.

The protein is UPF0102 protein Sfri_0388 of Shewanella frigidimarina (strain NCIMB 400).